We begin with the raw amino-acid sequence, 587 residues long: Proline-rich protein 14 (587 aa).

Residue methionine 1 is modified to N-acetylmethionine. Polar residues predominate over residues 1 to 11 (MDLPGDSSTPG). 3 disordered regions span residues 1–48 (MDLP…EKAS), 65–152 (VPLE…HQPT), and 181–241 (ARRA…RPRL). The sufficient for heterochromatin association in interphase and chromatin association in anaphase stretch occupies residues 1–135 (MDLPGDSSTP…TPRRQSRTTP (135 aa)). The tract at residues 85–378 (SVRSQPPASP…MAKAPPPPRP (294 aa)) is required for the interaction with GRB2 and sufficient to promote the phosphorylation of AKT and cell proliferation. Residues 136–365 (GPDEGPSQKV…RPRPRRHTVG (230 aa)) form a required for nuclear lamina association region. Residues 200–214 (LPAPSRPSALSANPL) show a composition bias toward low complexity. Pro residues predominate over residues 215 to 234 (ASPPPAPDPVLEPPSTPPPS). Serine 277 carries the post-translational modification Phosphoserine. 2 disordered regions span residues 290–444 (EAGQ…IGKV) and 524–587 (FRDS…PHRT). The span at 314 to 325 (AQDQNPSATLTK) shows a compositional bias: polar residues. Residues 337 to 356 (LGPPGPDPCSWPPVPAPSSR) are compositionally biased toward pro residues. Over residues 398–410 (TSCSSTASTSSFS) the composition is skewed to low complexity. Residues 519-536 (RRTVEFRDSSLPRSRRPS) form a required for nuclear localization region. A compositionally biased stretch (low complexity) spans 538 to 548 (GARATAGRTLP). Acidic residues predominate over residues 572-581 (LLEEEEEGDQ).

In terms of assembly, interacts (via proline-rich region) with GRB2 (via SH3 domain 2). Interacts (via N-terminus) with CBX5.

It is found in the chromosome. The protein localises to the nucleus. The protein resides in the nucleus lamina. Its subcellular location is the nucleoplasm. Functionally, functions in tethering peripheral heterochromatin to the nuclear lamina during interphase, possibly through the interaction with heterochromatin protein CBX5/HP1 alpha. Might play a role in reattaching heterochromatin to the nuclear lamina at mitotic exit. Promotes myoblast differentiation during skeletal myogenesis, possibly by stimulating transcription factor MyoD activity via binding to CBX5/HP1 alpha. Involved in the positive regulation of the PI3K-Akt-mTOR signaling pathway and in promoting cell proliferation, possibly via binding to GRB2. The chain is Proline-rich protein 14 (PRR14) from Bos taurus (Bovine).